The chain runs to 827 residues: Glycerol-3-phosphate acyltransferase 1, mitochondrial (827 aa).

The Cytoplasmic segment spans residues 1–87; sequence MEESSVTVGT…FFNPSIPSLG (87 aa). Residues 80 to 120 form an important for mitochondrial localization region; the sequence is NPSIPSLGLRNVIYINETHTRHRGWLARRLSYILFVQERDV. The stretch at 88 to 118 is an intramembrane region; sequence LRNVIYINETHTRHRGWLARRLSYILFVQER. The Cytoplasmic portion of the chain corresponds to 119 to 827; the sequence is DVHKGMFATS…LEYILSFVVL (709 aa). Positions 230–235 match the HXXXXD motif motif; sequence HRSHID. CoA is bound by residues arginine 278, arginine 279, lysine 288, arginine 293, and arginine 328. Serine 380 carries the post-translational modification Phosphoserine. Arginine 462 provides a ligand contact to CoA. Phosphoserine occurs at positions 687 and 694. N6-acetyllysine occurs at positions 779 and 783.

Belongs to the GPAT/DAPAT family. Highest levels in liver, intermediate levels in muscle and kidney, and lowest levels in lung and brain.

It is found in the mitochondrion outer membrane. It catalyses the reaction sn-glycerol 3-phosphate + an acyl-CoA = a 1-acyl-sn-glycero-3-phosphate + CoA. The catalysed reaction is (9Z,12Z)-octadecadienoyl-CoA + sn-glycerol 3-phosphate = 1-(9Z,12Z)-octadecadienoyl-sn-glycero-3-phosphate + CoA. It carries out the reaction sn-glycerol 3-phosphate + (9Z)-octadecenoyl-CoA = 1-(9Z-octadecenoyl)-sn-glycero-3-phosphate + CoA. The enzyme catalyses sn-glycerol 3-phosphate + octadecanoyl-CoA = 1-octadecanoyl-sn-glycero-3-phosphate + CoA. It catalyses the reaction sn-glycerol 3-phosphate + hexadecanoyl-CoA = 1-hexadecanoyl-sn-glycero-3-phosphate + CoA. The catalysed reaction is dodecanoyl-CoA + sn-glycerol 3-phosphate = 1-dodecanoyl-sn-glycerol 3-phosphate + CoA. It carries out the reaction 1-acyl-sn-glycero-3-phospho-(1'-sn-glycerol) + an acyl-CoA = a 1,2-diacyl-sn-glycero-3-phospho-(1'-sn-glycerol) + CoA. It functions in the pathway phospholipid metabolism; CDP-diacylglycerol biosynthesis; CDP-diacylglycerol from sn-glycerol 3-phosphate: step 1/3. Its function is as follows. Mitochondrial membrane protein that catalyzes the essential first step of biosynthesis of glycerolipids such as triglycerides, phosphatidic acids and lysophosphatidic acids. Esterifies acyl-group from acyl-coenzyme A (acyl-CoA) to the sn-1 position of glycerol-3-phosphate, to produce lysophosphatidic acid. Has a narrow hydrophobic binding cleft that selects for a linear acyl chain. Catalytic activity is higher for substrates with a 16-carbon acyl chain. This Mus musculus (Mouse) protein is Glycerol-3-phosphate acyltransferase 1, mitochondrial.